A 48-amino-acid polypeptide reads, in one-letter code: Protein YodE (48 aa).

The sequence is that of Protein YodE from Escherichia coli (strain K12).